Here is a 405-residue protein sequence, read N- to C-terminus: Tryptophan synthase beta chain (405 aa).

K96 is modified (N6-(pyridoxal phosphate)lysine).

Belongs to the TrpB family. In terms of assembly, tetramer of two alpha and two beta chains. It depends on pyridoxal 5'-phosphate as a cofactor.

The enzyme catalyses (1S,2R)-1-C-(indol-3-yl)glycerol 3-phosphate + L-serine = D-glyceraldehyde 3-phosphate + L-tryptophan + H2O. It participates in amino-acid biosynthesis; L-tryptophan biosynthesis; L-tryptophan from chorismate: step 5/5. Its function is as follows. The beta subunit is responsible for the synthesis of L-tryptophan from indole and L-serine. The protein is Tryptophan synthase beta chain of Clostridium botulinum (strain Alaska E43 / Type E3).